A 337-amino-acid polypeptide reads, in one-letter code: F420-dependent glucose-6-phosphate dehydrogenase (337 aa).

D44 is a coenzyme F420-(gamma-Glu)n binding site. H45 (proton donor) is an active-site residue. Residues T81 and 112–113 each bind coenzyme F420-(gamma-Glu)n; that span reads TG. E114 functions as the Proton acceptor in the catalytic mechanism. Residues N117, 180 to 181, and 183 to 184 contribute to the coenzyme F420-(gamma-Glu)n site; these read GG and GV. Substrate is bound by residues T198, K201, K262, and R286.

The protein belongs to the F420-dependent glucose-6-phosphate dehydrogenase family. Homodimer.

It carries out the reaction oxidized coenzyme F420-(gamma-L-Glu)(n) + D-glucose 6-phosphate + H(+) = 6-phospho-D-glucono-1,5-lactone + reduced coenzyme F420-(gamma-L-Glu)(n). Its function is as follows. Catalyzes the coenzyme F420-dependent oxidation of glucose 6-phosphate (G6P) to 6-phosphogluconolactone. In Kineococcus radiotolerans (strain ATCC BAA-149 / DSM 14245 / SRS30216), this protein is F420-dependent glucose-6-phosphate dehydrogenase.